An 82-amino-acid polypeptide reads, in one-letter code: MVKLRLKRYGRKKQPSYRIVVMDSRNKRDGKAIEELGFYNPINNETRVNISKILQRLSQGAQATKTVKNILNKAQIVAEKNN.

Belongs to the bacterial ribosomal protein bS16 family.

It is found in the plastid. The protein localises to the chloroplast. The protein is Small ribosomal subunit protein bS16c of Pyropia yezoensis (Susabi-nori).